Here is a 239-residue protein sequence, read N- to C-terminus: Trimethylguanosine synthase (239 aa).

The protein belongs to the methyltransferase superfamily. Trimethylguanosine synthase family. In terms of assembly, monomer. Interacts with mug174; both proteins are required to maintain Cajal body integrity.

The protein resides in the nucleus. Its subcellular location is the cajal body. The catalysed reaction is a 5'-end (N(7)-methyl 5'-triphosphoguanosine)-ribonucleoside in snRNA + S-adenosyl-L-methionine = a 5'-end (N(2),N(7)-dimethyl 5'-triphosphoguanosine)-ribonucleoside in snRNA + S-adenosyl-L-homocysteine + H(+). It carries out the reaction a 5'-end (N(7)-methyl 5'-triphosphoguanosine)-ribonucleoside in snoRNA + S-adenosyl-L-methionine = a 5'-end (N(2),N(7)-dimethyl 5'-triphosphoguanosine)-ribonucleoside in snoRNA + S-adenosyl-L-homocysteine + H(+). It catalyses the reaction a 5'-end (N(2),N(7)-dimethyl 5'-triphosphoguanosine)-ribonucleoside in snRNA + S-adenosyl-L-methionine = a 5'-end (N(2),N(2),N(7)-trimethyl 5'-triphosphoguanosine)-ribonucleoside in snRNA + S-adenosyl-L-homocysteine + H(+). The enzyme catalyses a 5'-end (N(2),N(7)-dimethyl 5'-triphosphoguanosine)-ribonucleoside in snoRNA + S-adenosyl-L-methionine = a 5'-end (N(2),N(2),N(7)-trimethyl 5'-triphosphoguanosine)-ribonucleoside in snoRNA + S-adenosyl-L-homocysteine + H(+). With respect to regulation, substrate inhibited by S-adenosyl-L-homocysteine. Catalyzes the two serial methylation steps for the conversion of the 7-monomethylguanosine (m(7)G) caps of snRNAs and snoRNAs to a 2,2,7-trimethylguanosine (m(2,2,7)G) cap structure. The enzyme is specific for guanine, and N7 methylation must precede N2 methylation. Required for pre-mRNA splicing, pre-rRNA processing and small ribosomal subunit synthesis. Involved in nucleolar structural organization. The sequence is that of Trimethylguanosine synthase (tgs1) from Schizosaccharomyces pombe (strain 972 / ATCC 24843) (Fission yeast).